The sequence spans 449 residues: POU domain, class 5, transcription factor 1.1 (449 aa).

Disordered stretches follow at residues 79–125 (ENNQ…SPPN) and 170–233 (YPTP…PSES). The segment covering 97–110 (SRIKVKEEVVHETD) has biased composition (basic and acidic residues). The span at 170–180 (YPTPANQSPNT) shows a compositional bias: polar residues. Positions 187-199 (SSMESSRCSSTNS) are enriched in low complexity. The span at 224 to 233 (DNEEEVPSES) shows a compositional bias: acidic residues. The region spanning 227 to 301 (EEVPSESEME…FLERWVVEAE (75 aa)) is the POU-specific domain. The segment at residues 321–380 (KRKRRTNIENIVKGTLESYFMKCPKPGAQEMVQIAKELNMDKDVVRVWFCNRRQKGKRQG) is a DNA-binding region (homeobox).

Belongs to the POU transcription factor family. Class-5 subfamily. In terms of assembly, interacts with components of the transcription complex that assembles on the vent2-B gene, including vent2 (via C-terminus), smad1 and smad4. Forms a repression complex on the promoters of the gsc and mix2 genes via interactions with the nodal/activin signaling pathway transducers foxh1/fast1, gtf2ird1/wbscr11 and smad2. Forms a repression complex on the promoters of the nodal/nr1 and siamois genes with the maternal factors tcf7l1/tcf3 and vegt. In terms of tissue distribution, highly enriched within the animal half of developing embryos within ectodermal and mesodermal regions. Expressed in the neuroectoderm at the early neurula stage, with expression initially extending to the future hindbrain/midbrain boundary, but later shifting toward the posterior pole where it persists within the tip of the tail in hatching embryos. Expressed at very low levels in the adult kidney.

The protein localises to the nucleus. Its function is as follows. Transcription factor that binds to the octamer motif (5'-ATTTGCAT-3'). Activates transcription when directly bound to the octamer DNA sequence, but can form repression complexes with other proteins at the promoter site to inhibit transcription. Binds to the promoter of the vent2-B gene to activate transcription when in the presence of other BMP signaling factors also bound to the promoter. Inhibits the competence of ectodermal cells to respond to BMP during embryogenesis thereby inhibiting epidermal differentiation and promoting neural induction. Antagonizes the activity of nodal/activin signaling by forming a transcriptional repression complex on the gsc and mix2 gene promoters to inhibit their transcription, and thus maintain the undifferentiated state of embryonic cells to prevent them from differentiating prematurely. Acts maternally to inhibit vegt and beta-catenin-activated gene transcription by forming a transcriptional repression complex on the nodal/nr1 and siamois promoters to inhibit their transcription. The protein is POU domain, class 5, transcription factor 1.1 (pou5f1.1) of Xenopus laevis (African clawed frog).